Here is a 231-residue protein sequence, read N- to C-terminus: Ion-translocating oxidoreductase complex subunit E (231 aa).

The next 6 membrane-spanning stretches (helical) occupy residues 18 to 38 (ALVQ…ATNA), 39 to 59 (LGLG…ISTL), 63 to 83 (TPAE…VSAV), 86 to 106 (LINA…PLIV), 125 to 145 (ALSA…MCVL), and 182 to 202 (PFLL…MLAG).

It belongs to the NqrDE/RnfAE family. In terms of assembly, the complex is composed of six subunits: RsxA, RsxB, RsxC, RsxD, RsxE and RsxG.

The protein resides in the cell inner membrane. Functionally, part of a membrane-bound complex that couples electron transfer with translocation of ions across the membrane. Required to maintain the reduced state of SoxR. This chain is Ion-translocating oxidoreductase complex subunit E, found in Escherichia coli (strain SMS-3-5 / SECEC).